The primary structure comprises 200 residues: FMN-dependent NADH:quinone oxidoreductase (200 aa).

FMN is bound by residues Ser10 and 95 to 98 (MYNF).

It belongs to the azoreductase type 1 family. As to quaternary structure, homodimer. It depends on FMN as a cofactor.

It carries out the reaction 2 a quinone + NADH + H(+) = 2 a 1,4-benzosemiquinone + NAD(+). The enzyme catalyses N,N-dimethyl-1,4-phenylenediamine + anthranilate + 2 NAD(+) = 2-(4-dimethylaminophenyl)diazenylbenzoate + 2 NADH + 2 H(+). Functionally, quinone reductase that provides resistance to thiol-specific stress caused by electrophilic quinones. Also exhibits azoreductase activity. Catalyzes the reductive cleavage of the azo bond in aromatic azo compounds to the corresponding amines. This is FMN-dependent NADH:quinone oxidoreductase from Alteromonas mediterranea (strain DSM 17117 / CIP 110805 / LMG 28347 / Deep ecotype).